The following is a 515-amino-acid chain: MATSTGRWLLLRLALFGFLWEASGGLDSGASRDDDLLLPYPRARARLPRDCTRVRAGNREHESWPPPPATPGAGGLAVRTFVSHFRDRAVAGHLTRAVEPLRTFSVLEPGGPGGCAARRRATVEETARAADCRVAQNGGFFRMNSGECLGNVVSDERRVSSSGGLQNAQFGIRRDGTLVTGYLSEEEVLDTENPFVQLLSGVVWLIRNGSIYINESQATECDETQETGSFSKFVNVISARTAIGHDRKGQLVLFHADGQTEQRGINLWEMAEFLLKQDVVNAINLDGGGSATFVLNGTLASYPSDHCQDNMWRCPRQVSTVVCVHEPRCQPPDCHGHGTCVDGHCQCTGHFWRGPGCDELDCGPSNCSQHGLCTETGCRCDAGWTGSNCSEECPLGWHGPGCQRPCKCEHHCPCDPKTGNCSVSRVKQCLQPPEATLRAGELSFFTRTAWLALTLALAFLLLISTAANLSLLLSRAERNRRLHGDYAYHPLQEMNGEPLAAEKEQPGGAHNPFKD.

An N-terminal signal peptide occupies residues 1 to 25 (MATSTGRWLLLRLALFGFLWEASGG). The propeptide at 26 to 49 (LDSGASRDDDLLLPYPRARARLPR) is removed in mature form. Residues 50 to 448 (DCTRVRAGNR…AGELSFFTRT (399 aa)) are Lumenal-facing. Cystine bridges form between Cys-115–Cys-148, Cys-132–Cys-323, Cys-307–Cys-314, Cys-362–Cys-373, and Cys-380–Cys-389. N-linked (GlcNAc...) asparagine glycans are attached at residues Asn-208, Asn-214, and Asn-296. Residues 358–390 (DELDCGPSNCSQHGLCTETGCRCDAGWTGSNCS) enclose the EGF-like domain. Residues Asn-366, Asn-388, and Asn-420 are each glycosylated (N-linked (GlcNAc...) asparagine). Residues 449–469 (AWLALTLALAFLLLISTAANL) traverse the membrane as a helical segment. Residues 470–515 (SLLLSRAERNRRLHGDYAYHPLQEMNGEPLAAEKEQPGGAHNPFKD) lie on the Cytoplasmic side of the membrane. Residues 486 to 493 (YAYHPLQE) form a mediates the interaction with AP4M1 region. Residues 488-491 (YHPL) carry the Tyrosine-based internalization motif motif. Residues 511–515 (NPFKD) carry the NPF internalization motif motif.

In terms of assembly, homotetramer arranged as two disulfide-linked homodimers. Interacts with AP4M1. Post-translationally, the precursor is cleaved and activated in the trans-Golgi network by a furin endopeptidase. As to expression, isoform 2 may be brain-specific.

It localises to the golgi apparatus. Its subcellular location is the golgi stack membrane. The protein localises to the trans-Golgi network. The catalysed reaction is N(4)-[6-(N-acetyl-alpha-D-glucosaminyl-1-phospho)-alpha-D-mannosyl-(1-&gt;2)-alpha-D-mannosyl-(glycan)]-L-asparaginyl-[protein] + H2O = N(4)-[6-phospho-alpha-D-mannosyl-(1-&gt;2)-alpha-D-mannosyl-(glycan)]-L-asparaginyl-[protein] + N-acetyl-D-glucosamine + H(+). It participates in protein modification; protein glycosylation. Catalyzes the second step in the formation of the mannose 6-phosphate targeting signal on lysosomal enzyme oligosaccharides by removing GlcNAc residues from GlcNAc-alpha-P-mannose moieties, which are formed in the first step. Also hydrolyzes UDP-GlcNAc, a sugar donor for Golgi N-acetylglucosaminyltransferases. This Homo sapiens (Human) protein is N-acetylglucosamine-1-phosphodiester alpha-N-acetylglucosaminidase (NAGPA).